The primary structure comprises 441 residues: SVGFKAGVKDYKLTYYTPDYQTLDTDILAAFRVTPQPGVPPEEAGAAVAAESSTGTWTTVWTDGLTSLDRYKGRCYHIEPVAGEENQYIVYVAYPLDLFEEGSVTNMFTSIVGNVFGFKALRALRLEDLRIPPAYIKTFQGPPHGIQVERDKLNKYGRPLLGCTIKPKLGLSAKNYGRAVYECLRGGLDFTKDDENVNSQPFMRWRDRFLFCAEAIFKAQAETGEIKGHYLNATAGTCEEMIKRAVFARELGVPIVMHDYLTGGFTANTSLAHYCRDNGLLLHIHRAMHAVIDRQKNHGMHFRVLAKALRMSGGDHIHAGTVVGKLEGERDITLGFVDLLRDDYLEKDRSRGIYFNQFWVSMPGVLPVASGGIHVWHMPALTEIFGDDSVLQFGGGTLGHPWGNAPGAVANRVALEACVQARNEGYDLARDGNDIIRETCQ.

The residue at position 5 (Lys5) is an N6,N6,N6-trimethyllysine. Substrate contacts are provided by Asn114 and Thr164. Lys166 serves as the catalytic Proton acceptor. A substrate-binding site is contributed by Lys168. Mg(2+) contacts are provided by Lys192, Asp194, and Glu195. Lys192 is subject to N6-carboxylysine. His285 (proton acceptor) is an active-site residue. The substrate site is built by Arg286, His318, and Ser370.

The protein belongs to the RuBisCO large chain family. Type I subfamily. In terms of assembly, heterohexadecamer of 8 large chains and 8 small chains; disulfide-linked. The disulfide link is formed within the large subunit homodimers. The cofactor is Mg(2+). The disulfide bond which can form in the large chain dimeric partners within the hexadecamer appears to be associated with oxidative stress and protein turnover.

The protein localises to the plastid. Its subcellular location is the chloroplast. It catalyses the reaction 2 (2R)-3-phosphoglycerate + 2 H(+) = D-ribulose 1,5-bisphosphate + CO2 + H2O. It carries out the reaction D-ribulose 1,5-bisphosphate + O2 = 2-phosphoglycolate + (2R)-3-phosphoglycerate + 2 H(+). Its function is as follows. RuBisCO catalyzes two reactions: the carboxylation of D-ribulose 1,5-bisphosphate, the primary event in carbon dioxide fixation, as well as the oxidative fragmentation of the pentose substrate in the photorespiration process. Both reactions occur simultaneously and in competition at the same active site. The sequence is that of Ribulose bisphosphate carboxylase large chain from Drosera petiolaris (Woolly sundew).